A 609-amino-acid polypeptide reads, in one-letter code: Glutamine--fructose-6-phosphate aminotransferase [isomerizing] (609 aa).

Cys2 functions as the Nucleophile; for GATase activity in the catalytic mechanism. The region spanning 2 to 219 is the Glutamine amidotransferase type-2 domain; the sequence is CGIVAAVTQR…EGDIAIVARK (218 aa). SIS domains follow at residues 288–428 and 460–599; these read ENNI…SKKE and MANT…IDQP. The active-site For Fru-6P isomerization activity is Lys604.

Homodimer.

Its subcellular location is the cytoplasm. It carries out the reaction D-fructose 6-phosphate + L-glutamine = D-glucosamine 6-phosphate + L-glutamate. In terms of biological role, catalyzes the first step in hexosamine metabolism, converting fructose-6P into glucosamine-6P using glutamine as a nitrogen source. In Buchnera aphidicola subsp. Acyrthosiphon pisum (strain APS) (Acyrthosiphon pisum symbiotic bacterium), this protein is Glutamine--fructose-6-phosphate aminotransferase [isomerizing].